Consider the following 561-residue polypeptide: Nucleoprotein (561 aa).

Positions 52 to 237 (VRKDKRTDSD…ISHEPSALNI (186 aa)) are binding site for the cap structure m7GTP. The segment at 336-355 (SKPSAIQPPVRNGGSPDLKQ) is disordered. Mn(2+) contacts are provided by D380 and E382. E390, C497, H500, and C521 together coordinate Zn(2+). Residue D525 coordinates Mn(2+).

The protein belongs to the arenaviridae nucleocapsid protein family. As to quaternary structure, homomultimerizes to form the nucleocapsid. Binds to viral genomic RNA. Interacts with glycoprotein G2. Interacts with protein Z; this interaction probably directs the encapsidated genome to budding sites. Interacts with protein L; this interaction does not interfere with Z-L interaction. Interacts with host IKBKE (via Protein kinase domain); the interaction inhibits IKBKE kinase activity.

It localises to the virion. Its subcellular location is the host cytoplasm. Functionally, encapsidates the genome, protecting it from nucleases. The encapsidated genomic RNA is termed the nucleocapsid (NC). Serves as template for viral transcription and replication. The increased presence of protein N in host cell does not seem to trigger the switch from transcription to replication as observed in other negative strain RNA viruses. Through the interaction with host IKBKE, strongly inhibits the phosphorylation and nuclear translocation of host IRF3, a protein involved in interferon activation pathway, leading to the inhibition of interferon-beta and IRF3-dependent promoters activation. Also encodes a functional 3'-5' exoribonuclease that degrades preferentially dsRNA substrates and thereby participates in the suppression of interferon induction. This chain is Nucleoprotein, found in Cavia cutleri (Guinea pig).